A 211-amino-acid chain; its full sequence is Guanylate kinase (211 aa).

Residues 7 to 187 (GLLIILSGPS…AADRIIAIIR (181 aa)) enclose the Guanylate kinase-like domain. Residue 14 to 21 (GPSGVGKA) participates in ATP binding.

It belongs to the guanylate kinase family.

Its subcellular location is the cytoplasm. The enzyme catalyses GMP + ATP = GDP + ADP. Functionally, essential for recycling GMP and indirectly, cGMP. This Aster yellows witches'-broom phytoplasma (strain AYWB) protein is Guanylate kinase.